Reading from the N-terminus, the 287-residue chain is 2-dehydro-3-deoxyphosphooctonate aldolase (287 aa).

This sequence belongs to the KdsA family.

It localises to the cytoplasm. The enzyme catalyses D-arabinose 5-phosphate + phosphoenolpyruvate + H2O = 3-deoxy-alpha-D-manno-2-octulosonate-8-phosphate + phosphate. It functions in the pathway carbohydrate biosynthesis; 3-deoxy-D-manno-octulosonate biosynthesis; 3-deoxy-D-manno-octulosonate from D-ribulose 5-phosphate: step 2/3. The protein operates within bacterial outer membrane biogenesis; lipopolysaccharide biosynthesis. This is 2-dehydro-3-deoxyphosphooctonate aldolase from Bradyrhizobium sp. (strain ORS 278).